The sequence spans 416 residues: Isobutyryl-CoA dehydrogenase, mitochondrial (416 aa).

A mitochondrion-targeting transit peptide spans 1 to 23 (MMLRGGCQRVGARLRGLRRGPRG). K51 is subject to N6-acetyllysine; alternate. K51 is modified (N6-succinyllysine; alternate). FAD contacts are provided by residues 159–168 (YCLTEPGSGS) and 192–194 (FIS). S168 is a substrate binding site. N6-acetyllysine is present on K232. K272 carries the post-translational modification N6-succinyllysine. 275–278 (NGGR) serves as a coordination point for substrate. FAD is bound by residues R303, 313 to 314 (SQ), and 372 to 376 (QMHGG). E399 acts as the Proton acceptor in catalysis. 401 to 403 (SNE) serves as a coordination point for FAD. R411 is a substrate binding site.

This sequence belongs to the acyl-CoA dehydrogenase family. In terms of assembly, homotetramer, formed by a dimer of dimers. The cofactor is FAD.

The protein resides in the mitochondrion. The catalysed reaction is 2-methylpropanoyl-CoA + oxidized [electron-transfer flavoprotein] + H(+) = 2-methylpropenoyl-CoA + reduced [electron-transfer flavoprotein]. It carries out the reaction (2S)-2-methylbutanoyl-CoA + oxidized [electron-transfer flavoprotein] + H(+) = (2E)-2-methylbut-2-enoyl-CoA + reduced [electron-transfer flavoprotein]. The enzyme catalyses propanoyl-CoA + oxidized [electron-transfer flavoprotein] + H(+) = acryloyl-CoA + reduced [electron-transfer flavoprotein]. The protein operates within amino-acid degradation; L-valine degradation. Its function is as follows. Isobutyryl-CoA dehydrogenase which catalyzes the conversion of 2-methylpropanoyl-CoA to (2E)-2-methylpropenoyl-CoA in the valine catabolic pathway. To a lesser extent, also able to catalyze the oxidation of (2S)-2-methylbutanoyl-CoA. In Bos taurus (Bovine), this protein is Isobutyryl-CoA dehydrogenase, mitochondrial (ACAD8).